The following is a 63-amino-acid chain: ATP synthase F(0) complex subunit 8 (63 aa).

A helical transmembrane segment spans residues Thr8–Phe24. N6-acetyllysine is present on Lys57.

The protein belongs to the ATPase protein 8 family. Component of the ATP synthase complex composed at least of ATP5F1A/subunit alpha, ATP5F1B/subunit beta, ATP5MC1/subunit c (homooctomer), MT-ATP6/subunit a, MT-ATP8/subunit 8, ATP5ME/subunit e, ATP5MF/subunit f, ATP5MG/subunit g, ATP5MK/subunit k, ATP5MJ/subunit j, ATP5F1C/subunit gamma, ATP5F1D/subunit delta, ATP5F1E/subunit epsilon, ATP5PF/subunit F6, ATP5PB/subunit b, ATP5PD/subunit d, ATP5PO/subunit OSCP. ATP synthase complex consists of a soluble F(1) head domain (subunits alpha(3) and beta(3)) - the catalytic core - and a membrane F(0) domain - the membrane proton channel (subunits c, a, 8, e, f, g, k and j). These two domains are linked by a central stalk (subunits gamma, delta, and epsilon) rotating inside the F1 region and a stationary peripheral stalk (subunits F6, b, d, and OSCP). Interacts with PRICKLE3.

It is found in the mitochondrion membrane. Subunit 8, of the mitochondrial membrane ATP synthase complex (F(1)F(0) ATP synthase or Complex V) that produces ATP from ADP in the presence of a proton gradient across the membrane which is generated by electron transport complexes of the respiratory chain. ATP synthase complex consist of a soluble F(1) head domain - the catalytic core - and a membrane F(1) domain - the membrane proton channel. These two domains are linked by a central stalk rotating inside the F(1) region and a stationary peripheral stalk. During catalysis, ATP synthesis in the catalytic domain of F(1) is coupled via a rotary mechanism of the central stalk subunits to proton translocation. In vivo, can only synthesize ATP although its ATP hydrolase activity can be activated artificially in vitro. Part of the complex F(0) domain. The polypeptide is ATP synthase F(0) complex subunit 8 (Balaenoptera musculus (Blue whale)).